A 282-amino-acid chain; its full sequence is Pantothenate synthetase (282 aa).

30–37 (MGYLHEGH) lines the ATP pocket. The Proton donor role is filled by histidine 37. Residue glutamine 61 coordinates (R)-pantoate. Glutamine 61 provides a ligand contact to beta-alanine. An ATP-binding site is contributed by 147–150 (GEKD). Glutamine 153 contributes to the (R)-pantoate binding site. Residues isoleucine 176 and 184-187 (KSSR) each bind ATP.

It belongs to the pantothenate synthetase family. Homodimer.

It is found in the cytoplasm. The enzyme catalyses (R)-pantoate + beta-alanine + ATP = (R)-pantothenate + AMP + diphosphate + H(+). Its pathway is cofactor biosynthesis; (R)-pantothenate biosynthesis; (R)-pantothenate from (R)-pantoate and beta-alanine: step 1/1. In terms of biological role, catalyzes the condensation of pantoate with beta-alanine in an ATP-dependent reaction via a pantoyl-adenylate intermediate. The protein is Pantothenate synthetase of Enterococcus faecalis (strain ATCC 700802 / V583).